The primary structure comprises 729 residues: Ribosomal RNA large subunit methyltransferase K/L (729 aa).

The THUMP domain maps to 47–158 (TFYRLCLWSR…KNELTLALDL (112 aa)).

The protein belongs to the methyltransferase superfamily. RlmKL family.

The protein localises to the cytoplasm. It catalyses the reaction guanosine(2445) in 23S rRNA + S-adenosyl-L-methionine = N(2)-methylguanosine(2445) in 23S rRNA + S-adenosyl-L-homocysteine + H(+). The enzyme catalyses guanosine(2069) in 23S rRNA + S-adenosyl-L-methionine = N(2)-methylguanosine(2069) in 23S rRNA + S-adenosyl-L-homocysteine + H(+). In terms of biological role, specifically methylates the guanine in position 2445 (m2G2445) and the guanine in position 2069 (m7G2069) of 23S rRNA. This is Ribosomal RNA large subunit methyltransferase K/L from Dichelobacter nodosus (strain VCS1703A).